Consider the following 201-residue polypeptide: Probable molybdenum cofactor guanylyltransferase (201 aa).

GTP is bound by residues 20-22 (LAG), K32, D77, and D106. D106 is a binding site for Mg(2+).

The protein belongs to the MobA family. The cofactor is Mg(2+).

It localises to the cytoplasm. It catalyses the reaction Mo-molybdopterin + GTP + H(+) = Mo-molybdopterin guanine dinucleotide + diphosphate. In terms of biological role, transfers a GMP moiety from GTP to Mo-molybdopterin (Mo-MPT) cofactor (Moco or molybdenum cofactor) to form Mo-molybdopterin guanine dinucleotide (Mo-MGD) cofactor. The polypeptide is Probable molybdenum cofactor guanylyltransferase (Aquifex aeolicus (strain VF5)).